Consider the following 701-residue polypeptide: Transcriptional regulator Kaiso (701 aa).

A BTB domain is found at 32–94 (CDVTVIVEDR…IYSSKIVRVR (63 aa)). 2 disordered regions span residues 128–158 (GAGG…SPLP) and 181–311 (SSDD…QNQH). The segment covering 245 to 258 (TPSSQVQLTQNSLP) has biased composition (polar residues). Residues 259–273 (TNQQSSKNTSSTTQK) show a composition bias toward low complexity. Over residues 278–311 (VNANISKNPTPAANGFLSPTAQKQGTPNAVQNQH) the composition is skewed to polar residues. Residues 470–609 (AKLDLDGLPN…QIRQYAYVNN (140 aa)) form a required for methylation dependent DNA-binding region. C2H2-type zinc fingers lie at residues 501 to 523 (YICI…FNVH), 529 to 551 (YPCR…EIHH), and 557 to 580 (YQCL…RSVH). Residues 519–701 (HFNVHSWEKK…EFEFVIPESY (183 aa)) form a required for sequence specific DNA-binding region. Residues 644–664 (DIDPDEPQQPASEGNHANSAT) are disordered. Polar residues predominate over residues 652–664 (QPASEGNHANSAT).

As to quaternary structure, self associates. Interacts with tcf7l1-A, leading to repression of tcf7l1-A target genes. Interacts with ctnnd1, and this interaction may inhibit DNA-binding. Interacts with ncor1.

The protein resides in the nucleus. Transcriptional regulator with bimodal DNA-binding specificity. Binds to methylated CpG dinucleotides in the consensus sequence 5'-CGCG-3' and also binds to the non-methylated consensus sequence 5'-CTGCNA-3'. May recruit the N-CoR repressor complex to promote histone deacetylation and the formation of repressive chromatin structures in target gene promoters. Contributes to the repression of target genes of the Wnt signaling pathway and to the methylation-dependent repression of zygotic transcription prior to the mid-blastula transition (MBT). Also required for gastrulation movements. The sequence is that of Transcriptional regulator Kaiso (zbtb33) from Xenopus laevis (African clawed frog).